The primary structure comprises 890 residues: Potassium/sodium hyperpolarization-activated cyclic nucleotide-gated channel 1 (890 aa).

Residues 1–93 (MEGGGKPNSS…AEGPRRQYGF (93 aa)) are disordered. At 1-142 (MEGGGKPNSS…WIIHPYSDFR (142 aa)) the chain is on the cytoplasmic side. Residues 8-34 (NSSSNSRDDGNSVFPAKASATGAGPAA) are compositionally biased toward low complexity. Gly residues predominate over residues 62-77 (DGGGGGGGGGGGGEEP). A helical transmembrane segment spans residues 143-164 (FYWDLIMLIMMVGNLVIIPVGI). The Extracellular segment spans residues 165-173 (TFFTEQTTT). The chain crosses the membrane as a helical span at residues 174–194 (PWIIFNVASDTVFLLDLIMNF). Over 195-215 (RTGTVNEDSSEIILDPKVIKM) the chain is Cytoplasmic. A helical transmembrane segment spans residues 216–236 (NYLKSWFVVDFISSIPVDYIF). Residues 237–260 (LIVEKGMDSEVYKTARALRIVRFT) lie on the Extracellular side of the membrane. The chain crosses the membrane as a helical; Voltage-sensor span at residues 261–281 (KILSLLRLLRLSRLIRYIHQW). The Cytoplasmic segment spans residues 282–295 (EEIFHMTYDLASAV). A helical transmembrane segment spans residues 296 to 318 (VRIFNLIGMMLLLCHWDGCLQFL). Residues 319–344 (VPLLQDFPPDCWVSLNEMVNDSWGKQ) lie on the Extracellular side of the membrane. A glycan (N-linked (GlcNAc...) asparagine) is linked at Asn338. An intramembrane region (pore-forming) is located at residues 345–366 (YSYALFKAMSHMLCIGYGAQAP). Residues 358-362 (CIGYG) carry the Selectivity filter motif. Residues 367-371 (VSMSD) lie on the Extracellular side of the membrane. Residues 372–392 (LWITMLSMIVGATCYAMFVGH) form a helical membrane-spanning segment. The Cytoplasmic portion of the chain corresponds to 393–890 (ATALIQSLDS…AEKPRFASNL (498 aa)). Residues Gly539, Glu540, Cys542, Arg549, Thr550, Arg590, and Arg593 each coordinate 3',5'-cyclic AMP. Low complexity-rich tracts occupy residues 644 to 691 (MTTL…PQPS) and 731 to 749 (QQQPQQQVQQSQPPQTQPQ). Disordered regions lie at residues 644-692 (MTTL…QPSA), 725-796 (SQLS…LPHE), and 845-890 (MSSG…ASNL). Residues 770 to 780 (STQALHNTNLT) are compositionally biased toward polar residues. Over residues 854 to 865 (RGVPPAPPPPAA) the composition is skewed to pro residues. Over residues 880-890 (DAEKPRFASNL) the composition is skewed to basic and acidic residues.

This sequence belongs to the potassium channel HCN family. Homotetramer. Heterotetramer with HCN2. The potassium channel is composed of a homo- or heterotetrameric complex of pore-forming subunits. Interacts with KCNE2. Interacts with the SH3 domain of CSK. As to expression, detected in brain, in particular in amygdala and hippocampus, while expression in caudate nucleus, corpus callosum, substantia nigra, subthalamic nucleus and thalamus is very low or not detectable. Detected at very low levels in muscle and pancreas.

The protein resides in the cell membrane. It carries out the reaction Na(+)(in) = Na(+)(out). The catalysed reaction is K(+)(in) = K(+)(out). With respect to regulation, activated by cAMP, and at 10-100 times higher concentrations, also by cGMP. cAMP binding promotes tetramerization and formation of an active channel. Compared to other family members, cAMP has less stimulatory effect on HCN1 because part of the molecules already contain bound cAMP and form homotetramers when cAMP levels are low, this inherent tetramerization in HCN1 results in a weaker response to increased cAMP. Inhibited by Cs(1+), zatebradine, capsazepine and ZD7288. In terms of biological role, hyperpolarization-activated ion channel that are permeable to sodium and potassium ions. Displays lower selectivity for K(+) over Na(+) ions. Contributes to the native pacemaker currents in heart (If) and in the generation of the I(h) current which controls neuron excitability. Participates in cerebellar mechanisms of motor learning. May mediate responses to sour stimuli. This is Potassium/sodium hyperpolarization-activated cyclic nucleotide-gated channel 1 (HCN1) from Homo sapiens (Human).